Reading from the N-terminus, the 455-residue chain is Bifunctional protein GlmU (455 aa).

A pyrophosphorylase region spans residues 1–229 (MLNSAMSVVI…ISETEGVNNR (229 aa)). UDP-N-acetyl-alpha-D-glucosamine contacts are provided by residues 11–14 (LAAG), lysine 25, glutamine 76, 81–82 (GT), 103–105 (YGD), glycine 140, glutamate 154, asparagine 169, and asparagine 227. Aspartate 105 contacts Mg(2+). Residue asparagine 227 participates in Mg(2+) binding. The interval 230 to 250 (LQLSRLERIYQAEQAEKLLLA) is linker. The interval 251 to 455 (GVMLRDPARF…KQGWQRPVKK (205 aa)) is N-acetyltransferase. UDP-N-acetyl-alpha-D-glucosamine is bound by residues arginine 333 and lysine 351. Residue histidine 363 is the Proton acceptor of the active site. UDP-N-acetyl-alpha-D-glucosamine-binding residues include tyrosine 366 and asparagine 377. Acetyl-CoA is bound by residues alanine 380, 386–387 (NY), serine 405, alanine 423, and arginine 440.

It in the N-terminal section; belongs to the N-acetylglucosamine-1-phosphate uridyltransferase family. The protein in the C-terminal section; belongs to the transferase hexapeptide repeat family. Homotrimer. Mg(2+) serves as cofactor.

It is found in the cytoplasm. It carries out the reaction alpha-D-glucosamine 1-phosphate + acetyl-CoA = N-acetyl-alpha-D-glucosamine 1-phosphate + CoA + H(+). It catalyses the reaction N-acetyl-alpha-D-glucosamine 1-phosphate + UTP + H(+) = UDP-N-acetyl-alpha-D-glucosamine + diphosphate. It functions in the pathway nucleotide-sugar biosynthesis; UDP-N-acetyl-alpha-D-glucosamine biosynthesis; N-acetyl-alpha-D-glucosamine 1-phosphate from alpha-D-glucosamine 6-phosphate (route II): step 2/2. Its pathway is nucleotide-sugar biosynthesis; UDP-N-acetyl-alpha-D-glucosamine biosynthesis; UDP-N-acetyl-alpha-D-glucosamine from N-acetyl-alpha-D-glucosamine 1-phosphate: step 1/1. The protein operates within bacterial outer membrane biogenesis; LPS lipid A biosynthesis. Its function is as follows. Catalyzes the last two sequential reactions in the de novo biosynthetic pathway for UDP-N-acetylglucosamine (UDP-GlcNAc). The C-terminal domain catalyzes the transfer of acetyl group from acetyl coenzyme A to glucosamine-1-phosphate (GlcN-1-P) to produce N-acetylglucosamine-1-phosphate (GlcNAc-1-P), which is converted into UDP-GlcNAc by the transfer of uridine 5-monophosphate (from uridine 5-triphosphate), a reaction catalyzed by the N-terminal domain. The sequence is that of Bifunctional protein GlmU from Salmonella arizonae (strain ATCC BAA-731 / CDC346-86 / RSK2980).